Consider the following 417-residue polypeptide: Snake venom metalloproteinase acutolysin-C (417 aa).

Residues 1 to 20 (MIQVLLVTICLAALPYQGSS) form the signal peptide. A propeptide spans 21 to 189 (IMLESGKVND…KRPSRLNLTP (169 aa)) (activation peptide). Residues 197–392 (TSVNLQLIVD…KKPKCIHKKS (196 aa)) form the Peptidase M12B domain. Cystine bridges form between Cys-308–Cys-387, Cys-349–Cys-371, and Cys-351–Cys-354. His-333 is a Zn(2+) binding site. Glu-334 is an active-site residue. Zn(2+) is bound by residues His-337 and His-343. Residues 393 to 417 (LKTDTVSTSVSGNEPLDDNVDGFHA) constitute a propeptide that is removed on maturation. Residues 398–417 (VSTSVSGNEPLDDNVDGFHA) form a disordered region. Residues 407 to 417 (PLDDNVDGFHA) show a composition bias toward acidic residues.

Belongs to the venom metalloproteinase (M12B) family. P-I subfamily. In terms of assembly, monomer. Zn(2+) is required as a cofactor. Expressed by the venom gland.

The protein resides in the secreted. Functionally, this protein is an alkaline zinc metalloprotease from snake venom that possesses weak hemorrhagic activity. The sequence is that of Snake venom metalloproteinase acutolysin-C from Deinagkistrodon acutus (Hundred-pace snake).